A 105-amino-acid polypeptide reads, in one-letter code: Large ribosomal subunit protein uL22 (105 aa).

Belongs to the universal ribosomal protein uL22 family. As to quaternary structure, part of the 50S ribosomal subunit.

In terms of biological role, this protein binds specifically to 23S rRNA; its binding is stimulated by other ribosomal proteins, e.g. L4, L17, and L20. It is important during the early stages of 50S assembly. It makes multiple contacts with different domains of the 23S rRNA in the assembled 50S subunit and ribosome. The globular domain of the protein is located near the polypeptide exit tunnel on the outside of the subunit, while an extended beta-hairpin is found that lines the wall of the exit tunnel in the center of the 70S ribosome. This chain is Large ribosomal subunit protein uL22, found in Sulfurimonas denitrificans (strain ATCC 33889 / DSM 1251) (Thiomicrospira denitrificans (strain ATCC 33889 / DSM 1251)).